A 162-amino-acid polypeptide reads, in one-letter code: Phosphopantetheine adenylyltransferase (162 aa).

Thr10 is a binding site for substrate. ATP contacts are provided by residues 10–11 and His18; that span reads TF. Substrate is bound by residues Lys42, Leu74, and Arg88. ATP is bound by residues 89–91, Glu99, and 124–130; these read GLR and FSCISST.

The protein belongs to the bacterial CoaD family. In terms of assembly, homohexamer. Mg(2+) is required as a cofactor.

The protein resides in the cytoplasm. It carries out the reaction (R)-4'-phosphopantetheine + ATP + H(+) = 3'-dephospho-CoA + diphosphate. The protein operates within cofactor biosynthesis; coenzyme A biosynthesis; CoA from (R)-pantothenate: step 4/5. Its function is as follows. Reversibly transfers an adenylyl group from ATP to 4'-phosphopantetheine, yielding dephospho-CoA (dPCoA) and pyrophosphate. This chain is Phosphopantetheine adenylyltransferase, found in Francisella philomiragia subsp. philomiragia (strain ATCC 25017 / CCUG 19701 / FSC 153 / O#319-036).